Consider the following 250-residue polypeptide: Carboxymethylproline synthase (250 aa).

60-64 (AGGDF) lines the malonyl-CoA pocket.

Belongs to the enoyl-CoA hydratase/isomerase family. In terms of assembly, homotrimer.

It catalyses the reaction (S)-1-pyrroline-5-carboxylate + malonyl-CoA + H2O + H(+) = (2S,5S)-5-carboxymethylproline + CO2 + CoA. It functions in the pathway antibiotic biosynthesis; carbapenem biosynthesis. Catalyzes the formation of (2S,5S)-carboxymethylproline (t-CMP) from malonyl-CoA and (S)-1-pyrroline-5-carboxylate, the first step in the biosynthesis of (5R)-carbapen-2-em-3-carboxylate, a beta-lactam antibiotic of the carbapenem class. Also catalyzes the independent decarboxylation of malonyl-CoA and methylmalonyl-CoA and the hydrolysis of CoA esters such as acetyl-CoA and propionyl-CoA. Catalyzes the reaction with a C2 epimeric mixture of methylmalonyl-CoA to give a 55:45 mixture of (6R)- and (6S)-epimers of 6-methyl-t-CMP, under standard incubation conditions. The sequence is that of Carboxymethylproline synthase from Pectobacterium carotovorum subsp. carotovorum (Erwinia carotovora subsp. carotovora).